A 150-amino-acid polypeptide reads, in one-letter code: Deoxyuridine 5'-triphosphate nucleotidohydrolase (150 aa).

Substrate-binding positions include 69–71, N82, and 86–88; these read RSG and LID.

It belongs to the dUTPase family. It depends on Mg(2+) as a cofactor.

It carries out the reaction dUTP + H2O = dUMP + diphosphate + H(+). It participates in pyrimidine metabolism; dUMP biosynthesis; dUMP from dCTP (dUTP route): step 2/2. Functionally, this enzyme is involved in nucleotide metabolism: it produces dUMP, the immediate precursor of thymidine nucleotides and it decreases the intracellular concentration of dUTP so that uracil cannot be incorporated into DNA. This chain is Deoxyuridine 5'-triphosphate nucleotidohydrolase, found in Methylobacillus flagellatus (strain ATCC 51484 / DSM 6875 / VKM B-1610 / KT).